The primary structure comprises 353 residues: Photosystem II protein D1 (353 aa).

The residue at position 2 (Thr2) is an N-acetylthreonine. Position 2 is a phosphothreonine (Thr2). 3 helical membrane-spanning segments follow: residues 29-46 (YIGWFGVLMIPLLLTATS), 118-133 (HFLLGVCCYMGREWEL), and 142-156 (WIAVAYSAPVAAATA). His118 contributes to the chlorophyll a binding site. Position 126 (Tyr126) interacts with pheophytin a. Positions 170 and 189 each coordinate [CaMn4O5] cluster. The chain crosses the membrane as a helical span at residues 197 to 218 (FHMLGVAGVFGGSLFSAMHGSL). His198 contributes to the chlorophyll a binding site. Residues His215 and 264-265 (SF) each bind a quinone. His215 is a binding site for Fe cation. A Fe cation-binding site is contributed by His272. The chain crosses the membrane as a helical span at residues 274-288 (FLAAWPVIGIWFTAL). The [CaMn4O5] cluster site is built by His332, Glu333, Asp342, and Ala344. Positions 345–353 (SVEAPSVNG) are excised as a propeptide.

It belongs to the reaction center PufL/M/PsbA/D family. In terms of assembly, PSII is composed of 1 copy each of membrane proteins PsbA, PsbB, PsbC, PsbD, PsbE, PsbF, PsbH, PsbI, PsbJ, PsbK, PsbL, PsbM, PsbT, PsbX, PsbY, PsbZ, Psb30/Ycf12, at least 3 peripheral proteins of the oxygen-evolving complex and a large number of cofactors. It forms dimeric complexes. The D1/D2 heterodimer binds P680, chlorophylls that are the primary electron donor of PSII, and subsequent electron acceptors. It shares a non-heme iron and each subunit binds pheophytin, quinone, additional chlorophylls, carotenoids and lipids. D1 provides most of the ligands for the Mn4-Ca-O5 cluster of the oxygen-evolving complex (OEC). There is also a Cl(-1) ion associated with D1 and D2, which is required for oxygen evolution. The PSII complex binds additional chlorophylls, carotenoids and specific lipids. is required as a cofactor. Tyr-161 forms a radical intermediate that is referred to as redox-active TyrZ, YZ or Y-Z. In terms of processing, C-terminally processed by CTPA; processing is essential to allow assembly of the oxygen-evolving complex and thus photosynthetic growth.

Its subcellular location is the plastid. It is found in the chloroplast thylakoid membrane. The catalysed reaction is 2 a plastoquinone + 4 hnu + 2 H2O = 2 a plastoquinol + O2. In terms of biological role, photosystem II (PSII) is a light-driven water:plastoquinone oxidoreductase that uses light energy to abstract electrons from H(2)O, generating O(2) and a proton gradient subsequently used for ATP formation. It consists of a core antenna complex that captures photons, and an electron transfer chain that converts photonic excitation into a charge separation. The D1/D2 (PsbA/PsbD) reaction center heterodimer binds P680, the primary electron donor of PSII as well as several subsequent electron acceptors. The polypeptide is Photosystem II protein D1 (Chlorokybus atmophyticus (Soil alga)).